The chain runs to 229 residues: tRNA pseudouridine synthase B (229 aa).

The Nucleophile role is filled by Asp-52.

Belongs to the pseudouridine synthase TruB family. Type 1 subfamily.

The catalysed reaction is uridine(55) in tRNA = pseudouridine(55) in tRNA. Its function is as follows. Responsible for synthesis of pseudouridine from uracil-55 in the psi GC loop of transfer RNAs. The protein is tRNA pseudouridine synthase B of Flavobacterium johnsoniae (strain ATCC 17061 / DSM 2064 / JCM 8514 / BCRC 14874 / CCUG 350202 / NBRC 14942 / NCIMB 11054 / UW101) (Cytophaga johnsonae).